Consider the following 497-residue polypeptide: Glycerol kinase (497 aa).

An ADP-binding site is contributed by threonine 12. ATP contacts are provided by threonine 12, threonine 13, and serine 14. Threonine 12 lines the sn-glycerol 3-phosphate pocket. Arginine 16 contributes to the ADP binding site. Sn-glycerol 3-phosphate-binding residues include arginine 82, glutamate 83, tyrosine 134, and aspartate 243. Residues arginine 82, glutamate 83, tyrosine 134, aspartate 243, and glutamine 244 each contribute to the glycerol site. Positions 265 and 308 each coordinate ADP. ATP contacts are provided by threonine 265, glycine 308, glutamine 312, and glycine 409. 2 residues coordinate ADP: glycine 409 and asparagine 413.

Belongs to the FGGY kinase family.

The enzyme catalyses glycerol + ATP = sn-glycerol 3-phosphate + ADP + H(+). Its pathway is polyol metabolism; glycerol degradation via glycerol kinase pathway; sn-glycerol 3-phosphate from glycerol: step 1/1. With respect to regulation, inhibited by fructose 1,6-bisphosphate (FBP). Key enzyme in the regulation of glycerol uptake and metabolism. Catalyzes the phosphorylation of glycerol to yield sn-glycerol 3-phosphate. This chain is Glycerol kinase, found in Nitratidesulfovibrio vulgaris (strain DSM 19637 / Miyazaki F) (Desulfovibrio vulgaris).